The sequence spans 440 residues: Actin-like protein 7A (440 aa).

A disordered region spans residues 1–29; the sequence is MSLDGVWAPQTANIGDGPAKKASDQASMQ. Residues 36–56 form a required for interaction with TES region; sequence ASLKDGPAKRAVWVRRDNAET.

It belongs to the actin family. In terms of assembly, interacts (via N-terminus) with TES (via LIM domain 2). Heterodimer with TES; the heterodimer interacts with ENAH to form a heterotrimer. Interacts with ACTL9. Interacts with CYLC1; the interaction may be relevant for proper acrosome attachment to the nuclear envelope. As to expression, detected in testis. Detected at the acrosome of round spermatids (at protein level). Detected in adult and embryonic testis. Detected in developing male germ cells.

The protein localises to the cytoplasm. Its subcellular location is the cytoskeleton. It is found in the golgi apparatus. It localises to the nucleus. The protein resides in the cytoplasmic vesicle. The protein localises to the secretory vesicle. Its subcellular location is the acrosome. Essential for normal spermatogenesis and male fertility. Required for normal sperm head morphology, acroplaxome formation, acrosome attachment, and acrosome granule stability. May anchor and stabilize acrosomal adherence to the acroplaxome at least in part by facilitating the presence of F-actin in the subacrosomal space. May play an important role in formation and fusion of Golgi-derived vesicles during acrosome biogenesis. The chain is Actin-like protein 7A (Actl7a) from Mus musculus (Mouse).